A 313-amino-acid chain; its full sequence is Small ribosomal subunit protein uS2 (313 aa).

The disordered stretch occupies residues alanine 281–glutamate 301.

This sequence belongs to the universal ribosomal protein uS2 family.

The protein is Small ribosomal subunit protein uS2 of Caulobacter sp. (strain K31).